Here is a 438-residue protein sequence, read N- to C-terminus: Xylose isomerase (438 aa).

Mg(2+) contacts are provided by Asp306 and Asp308.

This sequence belongs to the xylose isomerase family. Homotetramer. Requires Mg(2+) as cofactor.

Its subcellular location is the cytoplasm. It catalyses the reaction alpha-D-xylose = alpha-D-xylulofuranose. The protein is Xylose isomerase of Pseudomonas fluorescens (strain SBW25).